An 813-amino-acid chain; its full sequence is Putative ATPase, plasma membrane-like (813 aa).

Topologically, residues 1-66 (MATGDSLEDI…KKKEHITLRF (66 aa)) are cytoplasmic. The chain crosses the membrane as a helical span at residues 67–86 (FALMFKPLSWVIQAAAIMAM). The Extracellular segment spans residues 87-94 (LFANGDGR). Residues 95 to 115 (QLFLGIVCLLIVNTIICYLKE) form a helical membrane-spanning segment. Residues 116 to 245 (DDAANVVAMA…GHFRKVVTEI (130 aa)) are Cytoplasmic-facing. A helical membrane pass occupies residues 246–266 (ENLCVISIAIGISIEVIVMYW). Residues 267–275 (IQRRNFSDV) lie on the Extracellular side of the membrane. Residues 276–293 (INNLLVLVIGGIPLAMPT) traverse the membrane as a helical segment. The Cytoplasmic portion of the chain corresponds to 294–555 (VLYVIMVTGS…ASRAILQQMK (262 aa)). The active-site 4-aspartylphosphate intermediate is the Asp-331. Mg(2+) contacts are provided by Asp-500 and Asp-504. A helical transmembrane segment spans residues 556 to 577 (HYTIYAVSITIRVVFGFMFIAL). Residues 578–582 (IWKFD) lie on the Extracellular side of the membrane. The helical transmembrane segment at 583–605 (FSPFMVLAIALLNEETTKAITMD) threads the bilayer. Residues 606–622 (NVTNPSPTPDSLKLKEI) are Cytoplasmic-facing. The chain crosses the membrane as a helical span at residues 623-643 (FATGVVYGSYMALITVVFFWA). At 644–664 (AYRTDIFPRTFHVRDLRGNEA) the chain is on the extracellular side. The helical transmembrane segment at 665 to 685 (EMMCALYLQVSIMSQALFFVI) threads the bilayer. Residues 686-697 (QSRSWFFVERPG) lie on the Cytoplasmic side of the membrane. The helical transmembrane segment at 698–718 (ELLFLSFVTVQTIATTLAVYA) threads the bilayer. Topologically, residues 719–726 (SWETARIE) are extracellular. A helical transmembrane segment spans residues 727–747 (GIGWSWAGVIWLYNIIFFFPL). Residues 748–813 (DIMKFGIRYI…SQDLRGVGWV (66 aa)) are Cytoplasmic-facing. Residue Ser-776 is modified to Phosphoserine.

This sequence belongs to the cation transport ATPase (P-type) (TC 3.A.3) family. Type IIIA subfamily.

Its subcellular location is the membrane. The polypeptide is Putative ATPase, plasma membrane-like (Arabidopsis thaliana (Mouse-ear cress)).